The primary structure comprises 440 residues: Tryptophan synthase beta chain 2 (440 aa).

Position 110 is an N6-(pyridoxal phosphate)lysine (Lys110).

This sequence belongs to the TrpB family. Tetramer of two alpha and two beta chains. Pyridoxal 5'-phosphate serves as cofactor.

It catalyses the reaction (1S,2R)-1-C-(indol-3-yl)glycerol 3-phosphate + L-serine = D-glyceraldehyde 3-phosphate + L-tryptophan + H2O. It functions in the pathway amino-acid biosynthesis; L-tryptophan biosynthesis; L-tryptophan from chorismate: step 5/5. Functionally, the beta subunit is responsible for the synthesis of L-tryptophan from indole and L-serine. This Pyrococcus abyssi (strain GE5 / Orsay) protein is Tryptophan synthase beta chain 2 (trpB2).